Here is a 553-residue protein sequence, read N- to C-terminus: HTH-type transcriptional regulator SgrR (553 aa).

In terms of domain architecture, HTH marR-type spans 1–117 (MPSSRLQQQF…LSQIERRFRQ (117 aa)). The segment at residues 26–49 (LQELANVLHCSKRHIRSLLNNMQK) is a DNA-binding region (H-T-H motif). Residues 163–494 (EPEADLAHHW…NDLSKEVSQW (332 aa)) form a solute-binding region.

In terms of biological role, activates the small RNA gene sgrS under glucose-phosphate stress conditions as well as yfdZ. Represses its own transcription under both stress and non-stress conditions. Might act as a sensor of the intracellular accumulation of phosphoglucose by binding these molecules in its C-terminal solute-binding domain. The sequence is that of HTH-type transcriptional regulator SgrR from Photorhabdus laumondii subsp. laumondii (strain DSM 15139 / CIP 105565 / TT01) (Photorhabdus luminescens subsp. laumondii).